The primary structure comprises 550 residues: Arginine--tRNA ligase (550 aa).

The short motif at 130–140 is the 'HIGH' region element; sequence ANPTGPIHLGG.

Belongs to the class-I aminoacyl-tRNA synthetase family. As to quaternary structure, monomer.

It is found in the cytoplasm. The catalysed reaction is tRNA(Arg) + L-arginine + ATP = L-arginyl-tRNA(Arg) + AMP + diphosphate. In Corynebacterium glutamicum (strain ATCC 13032 / DSM 20300 / JCM 1318 / BCRC 11384 / CCUG 27702 / LMG 3730 / NBRC 12168 / NCIMB 10025 / NRRL B-2784 / 534), this protein is Arginine--tRNA ligase (argS).